The following is a 247-amino-acid chain: MTIRVAVLGAAGRMGSTTAQAVRDAEGLELVAEVDAGDDVAALAGRADVAVDFTLPDVTEANVHALLDAGIHAVVGTTGWDDDALGRVSDHVGRTAGLGVLVAPNFSLSAVLAMRFAAQAAPYFASAEVVELHHPRKVDAPSGTAVHTARGIADARGAAGSPPMPDATETALPGARGAVVDGVRVHALRLEGLVAHEEILLSNPGELMTIRTDTFDRASFMPGVLLAVREIADHPGLTVGLDAYLDL.

Residues 9-14 (GAAGRM), 76-78 (GTT), and 103-106 (APNF) each bind NAD(+). His-133 functions as the Proton donor/acceptor in the catalytic mechanism. His-134 is a binding site for (S)-2,3,4,5-tetrahydrodipicolinate. Residue Lys-137 is the Proton donor of the active site. Residue 143–144 (GT) coordinates (S)-2,3,4,5-tetrahydrodipicolinate.

This sequence belongs to the DapB family.

Its subcellular location is the cytoplasm. The enzyme catalyses (S)-2,3,4,5-tetrahydrodipicolinate + NAD(+) + H2O = (2S,4S)-4-hydroxy-2,3,4,5-tetrahydrodipicolinate + NADH + H(+). It catalyses the reaction (S)-2,3,4,5-tetrahydrodipicolinate + NADP(+) + H2O = (2S,4S)-4-hydroxy-2,3,4,5-tetrahydrodipicolinate + NADPH + H(+). The protein operates within amino-acid biosynthesis; L-lysine biosynthesis via DAP pathway; (S)-tetrahydrodipicolinate from L-aspartate: step 4/4. In terms of biological role, catalyzes the conversion of 4-hydroxy-tetrahydrodipicolinate (HTPA) to tetrahydrodipicolinate. In Beutenbergia cavernae (strain ATCC BAA-8 / DSM 12333 / CCUG 43141 / JCM 11478 / NBRC 16432 / NCIMB 13614 / HKI 0122), this protein is 4-hydroxy-tetrahydrodipicolinate reductase.